The chain runs to 560 residues: Choline/ethanolamine transporter FLVCR1 (560 aa).

The tract at residues 1–43 (MARPDDEVGPAVAPGHPLGKGYLPVPKGAPDGEARLVPQNGPE) is disordered. The Cytoplasmic portion of the chain corresponds to 1–92 (MARPDDEVGP…EDVPCPACPP (92 aa)). The chain crosses the membrane as a helical span at residues 93–117 (RTALSPRRFVVLLIFSLYSLVNAFQ). Topologically, residues 118–135 (WIQYSSISNVFEDFYEVS) are extracellular. The helical transmembrane segment at 136-163 (PLHINWLSMVYMVAYVPLIFPATWLLDT) threads the bilayer. Topologically, residues 164–165 (RG) are cytoplasmic. Residues 166–185 (LRLTALLGSGLNCLGAWVKC) form a helical membrane-spanning segment. Over 186-192 (GSVQRHL) the chain is Extracellular. Residues 193-221 (FWVTMLGQILCSVAQVFILGLPSPVASVW) traverse the membrane as a helical segment. Residue Gln-207 participates in ethanolamine binding. At 222–226 (FGPKE) the chain is on the cytoplasmic side. A helical membrane pass occupies residues 227–252 (VSTACATAVLGNQLGTAVGFLLPPVL). The Extracellular segment spans residues 253 to 270 (VPALGTQNNTGLLAHTQN). A glycan (N-linked (GlcNAc...) asparagine) is linked at Asn-270. The chain crosses the membrane as a helical span at residues 271 to 300 (NTDLLAHNINTMFYGTAFISTFLFFLTVIA). The Cytoplasmic portion of the chain corresponds to 301-336 (FKEKPPLPPSQAQAILRDSPPEEYSYKSSIWNLCRN). A helical membrane pass occupies residues 337 to 367 (IPFVLLLVSYGIMTGAFYSISTLLNQIILTY). Residues 368–371 (YVGE) lie on the Extracellular side of the membrane. Residues 372 to 400 (EVNAGRIGLTLVVAGMVGSILCGLWLDYT) traverse the membrane as a helical segment. Topologically, residues 401 to 402 (KT) are cytoplasmic. The helical transmembrane segment at 403–425 (YKQTTLIVYVLSFIGMLIFTFTL) threads the bilayer. Residues 426 to 428 (NLG) lie on the Extracellular side of the membrane. Residues 429 to 458 (YIVALFFTGGILGFFMTGYLPLGFEFAVEI) form a helical membrane-spanning segment. Over 459–466 (TYPESEGM) the chain is Cytoplasmic. Residues 467-492 (SSGLLNTAAQILGIFFTLAQGKITTD) form a helical membrane-spanning segment. Residue Gln-476 coordinates ethanolamine. Residue Gln-476 participates in choline binding. Residues 493–495 (YNS) are Extracellular-facing. The chain crosses the membrane as a helical span at residues 496 to 518 (PEAGNIFLCAWMFVGIILTALIK). The Cytoplasmic segment spans residues 519–560 (SDLRRHNINTGLTNIDVKAVPVDSRVDPKPKAMVSIQSESSL). Position 542 is a phosphoserine (Ser-542).

This sequence belongs to the major facilitator superfamily. Feline leukemia virus subgroup C receptor (TC 2.A.1.28.1) family.

The protein resides in the cell membrane. The catalysed reaction is choline(out) = choline(in). The enzyme catalyses ethanolamine(in) = ethanolamine(out). It carries out the reaction heme b(in) = heme b(out). Its function is as follows. Uniporter that mediates the transport of extracellular choline and ethanolamine into cells, thereby playing a key role in phospholipid biosynthesis. Choline and ethanolamine are the precursors of phosphatidylcholine and phosphatidylethanolamine, respectively, the two most abundant phospholipids. Transport is not coupled with proton transport and is exclusively driven by the choline (or ethanolamine) gradient across the plasma membrane. Also acts as a heme b transporter that mediates heme efflux from the cytoplasm to the extracellular compartment. This is Choline/ethanolamine transporter FLVCR1 (Flvcr1) from Mus terricolor (Earth-colored mouse).